The chain runs to 816 residues: Glycerol-3-phosphate acyltransferase (816 aa).

An HXXXXD motif motif is present at residues 298–303 (CHRSHM).

It belongs to the GPAT/DAPAT family.

Its subcellular location is the cell membrane. The enzyme catalyses sn-glycerol 3-phosphate + an acyl-CoA = a 1-acyl-sn-glycero-3-phosphate + CoA. It functions in the pathway phospholipid metabolism; CDP-diacylglycerol biosynthesis; CDP-diacylglycerol from sn-glycerol 3-phosphate: step 1/3. The chain is Glycerol-3-phosphate acyltransferase from Hamiltonella defensa subsp. Acyrthosiphon pisum (strain 5AT).